The following is a 493-amino-acid chain: Transcript termination protein A18 (493 aa).

The Helicase ATP-binding domain occupies 100–256 (MIELKRPLYI…NSIINIAKLS (157 aa)). 113 to 120 (LACGFGKT) contributes to the ATP binding site. Positions 206–209 (DESH) match the DESH box motif.

Belongs to the helicase family. Poxviruses subfamily. As to quaternary structure, interacts with G2. Might be part of a transcription complex composed at least of G2, A18, and H5.

It is found in the virion. Functionally, DNA helicase which seems to act as a postreplicative transcription termination factor. Involved in ATP-dependent release of nascent RNA. Forms a stable complex with single-stranded DNA, and to a lesser extent RNA. The sequence is that of Transcript termination protein A18 from Camelus.